Here is a 546-residue protein sequence, read N- to C-terminus: Probable protein kinase UbiB (546 aa).

One can recognise a Protein kinase domain in the interval 124–502 (DFEIKPLASA…HVRQGQSRYF (379 aa)). Residues 130–138 (LASASIAQV) and Lys153 each bind ATP. Asp288 acts as the Proton acceptor in catalysis. Transmembrane regions (helical) follow at residues 501–521 (YFLG…VSRP) and 522–542 (EWGL…FVGW).

This sequence belongs to the ABC1 family. UbiB subfamily.

The protein resides in the cell inner membrane. It participates in cofactor biosynthesis; ubiquinone biosynthesis [regulation]. Its function is as follows. Is probably a protein kinase regulator of UbiI activity which is involved in aerobic coenzyme Q (ubiquinone) biosynthesis. The protein is Probable protein kinase UbiB of Shigella sonnei (strain Ss046).